A 355-amino-acid polypeptide reads, in one-letter code: Serine acetyltransferase 4 (355 aa).

It belongs to the transferase hexapeptide repeat family. Homomultimer. Localized in vascular tissues, particularly in phloem.

The protein resides in the cytoplasm. It catalyses the reaction L-serine + acetyl-CoA = O-acetyl-L-serine + CoA. The protein operates within amino-acid biosynthesis; L-cysteine biosynthesis; L-cysteine from L-serine: step 1/2. Its activity is regulated as follows. Feedback inhibitions by L-Ser and acetyl-CoA. This Arabidopsis thaliana (Mouse-ear cress) protein is Serine acetyltransferase 4.